A 251-amino-acid chain; its full sequence is Ubiquinone/menaquinone biosynthesis C-methyltransferase UbiE (251 aa).

Residues Thr-74, Asp-95, 123 to 124 (NA), and Ser-140 each bind S-adenosyl-L-methionine.

Belongs to the class I-like SAM-binding methyltransferase superfamily. MenG/UbiE family.

The catalysed reaction is a 2-demethylmenaquinol + S-adenosyl-L-methionine = a menaquinol + S-adenosyl-L-homocysteine + H(+). It catalyses the reaction a 2-methoxy-6-(all-trans-polyprenyl)benzene-1,4-diol + S-adenosyl-L-methionine = a 5-methoxy-2-methyl-3-(all-trans-polyprenyl)benzene-1,4-diol + S-adenosyl-L-homocysteine + H(+). It functions in the pathway quinol/quinone metabolism; menaquinone biosynthesis; menaquinol from 1,4-dihydroxy-2-naphthoate: step 2/2. The protein operates within cofactor biosynthesis; ubiquinone biosynthesis. Methyltransferase required for the conversion of demethylmenaquinol (DMKH2) to menaquinol (MKH2) and the conversion of 2-polyprenyl-6-methoxy-1,4-benzoquinol (DDMQH2) to 2-polyprenyl-3-methyl-6-methoxy-1,4-benzoquinol (DMQH2). This Salmonella paratyphi A (strain AKU_12601) protein is Ubiquinone/menaquinone biosynthesis C-methyltransferase UbiE.